A 122-amino-acid chain; its full sequence is MSITKEQILDAVAEMSVMDVVELISMMEEKFGVSAAAAVAVAAGGPAEAAEEKTEFDVVLSAIGANKVAVIKAVRGATGLGLKEAKDLVESAPATLKEGVSKDDAETLKKDLEQAGASVEVK.

Belongs to the bacterial ribosomal protein bL12 family. Homodimer. Part of the ribosomal stalk of the 50S ribosomal subunit. Forms a multimeric L10(L12)X complex, where L10 forms an elongated spine to which 2 to 4 L12 dimers bind in a sequential fashion. Binds GTP-bound translation factors.

Forms part of the ribosomal stalk which helps the ribosome interact with GTP-bound translation factors. Is thus essential for accurate translation. This Sodalis glossinidius (strain morsitans) protein is Large ribosomal subunit protein bL12.